The chain runs to 91 residues: Conotoxin VnMKLT1-021 (91 aa).

The first 22 residues, 1 to 22 (MKLTCVMIVAVLFLTAWTFVTA), serve as a signal peptide directing secretion. Residues 23 to 57 (DDPRDGPDTAVGWRKLFSEARDEMKNREASKLNER) constitute a propeptide that is removed on maturation. Intrachain disulfides connect Cys59/Cys78, Cys66/Cys82, and Cys77/Cys86.

The protein belongs to the conotoxin O1 superfamily. In terms of tissue distribution, expressed by the venom duct.

The protein resides in the secreted. This is Conotoxin VnMKLT1-021 from Conus ventricosus (Mediterranean cone).